The sequence spans 1383 residues: DNA-directed RNA polymerase subunit beta'' (1383 aa).

Residues Cys-220, Cys-289, Cys-296, and Cys-299 each contribute to the Zn(2+) site.

It belongs to the RNA polymerase beta' chain family. RpoC2 subfamily. As to quaternary structure, in plastids the minimal PEP RNA polymerase catalytic core is composed of four subunits: alpha, beta, beta', and beta''. When a (nuclear-encoded) sigma factor is associated with the core the holoenzyme is formed, which can initiate transcription. Zn(2+) serves as cofactor.

The protein resides in the plastid. Its subcellular location is the chloroplast. The enzyme catalyses RNA(n) + a ribonucleoside 5'-triphosphate = RNA(n+1) + diphosphate. DNA-dependent RNA polymerase catalyzes the transcription of DNA into RNA using the four ribonucleoside triphosphates as substrates. This Oenothera argillicola (Appalachian evening primrose) protein is DNA-directed RNA polymerase subunit beta''.